A 299-amino-acid polypeptide reads, in one-letter code: Oxygen-dependent coproporphyrinogen-III oxidase (299 aa).

Position 92 (Ser-92) interacts with substrate. A divalent metal cation contacts are provided by His-96 and His-106. His-106 acts as the Proton donor in catalysis. Asn-108–Arg-110 is a binding site for substrate. A divalent metal cation-binding residues include His-145 and His-175. The tract at residues Tyr-239–Glu-274 is important for dimerization. Substrate is bound at residue Gly-257–Arg-259.

The protein belongs to the aerobic coproporphyrinogen-III oxidase family. Homodimer. The cofactor is a divalent metal cation.

The protein resides in the cytoplasm. The catalysed reaction is coproporphyrinogen III + O2 + 2 H(+) = protoporphyrinogen IX + 2 CO2 + 2 H2O. It functions in the pathway porphyrin-containing compound metabolism; protoporphyrin-IX biosynthesis; protoporphyrinogen-IX from coproporphyrinogen-III (O2 route): step 1/1. Its function is as follows. Involved in the heme biosynthesis. Catalyzes the aerobic oxidative decarboxylation of propionate groups of rings A and B of coproporphyrinogen-III to yield the vinyl groups in protoporphyrinogen-IX. The chain is Oxygen-dependent coproporphyrinogen-III oxidase from Xanthomonas axonopodis pv. citri (strain 306).